The following is a 317-amino-acid chain: Tetraspanin-15 (317 aa).

The disordered stretch occupies residues 1-43 (MADNAQVVPVEEPAATATATATATATTEPEAKSSDQMESQSDN). Over 1-60 (MADNAQVVPVEEPAATATATATATATTEPEAKSSDQMESQSDNKPPMGTLMALVNILAAG) the chain is Cytoplasmic. Low complexity predominate over residues 7–28 (VVPVEEPAATATATATATATTE). The helical transmembrane segment at 61–81 (VLPIFTFVLSLTLLGYAVWLL) threads the bilayer. Over 82-96 (YMRSYDCEDILGLPR) the chain is Extracellular. A helical membrane pass occupies residues 97–117 (VQTLASVGLLAVFVVSNAALF). Residues 118-126 (LRRKFPMPA) lie on the Cytoplasmic side of the membrane. Residues 127–147 (LVVMVVVLLLMLFIGLAYAGV) form a helical membrane-spanning segment. Residues 148–287 (NEMQSRRFPA…IRSVRRKWWQ (140 aa)) are Extracellular-facing. N-linked (GlcNAc...) asparagine glycosylation is present at Asn224. The helical transmembrane segment at 288 to 308 (LGIFLIVISILLLMSHLLIFL) threads the bilayer. The Cytoplasmic portion of the chain corresponds to 309–317 (ATFWERFKG).

It belongs to the tetraspanin (TM4SF) family.

The protein localises to the membrane. Its function is as follows. May be involved in the regulation of cell differentiation. The protein is Tetraspanin-15 (TET15) of Arabidopsis thaliana (Mouse-ear cress).